A 211-amino-acid polypeptide reads, in one-letter code: Ribosomal RNA small subunit methyltransferase G (211 aa).

Residues G73, 126–127 (IE), and R142 contribute to the S-adenosyl-L-methionine site.

Belongs to the methyltransferase superfamily. RNA methyltransferase RsmG family.

The protein localises to the cytoplasm. It carries out the reaction guanosine(527) in 16S rRNA + S-adenosyl-L-methionine = N(7)-methylguanosine(527) in 16S rRNA + S-adenosyl-L-homocysteine. Functionally, specifically methylates the N7 position of guanine in position 527 of 16S rRNA. This Methylorubrum extorquens (strain CM4 / NCIMB 13688) (Methylobacterium extorquens) protein is Ribosomal RNA small subunit methyltransferase G.